We begin with the raw amino-acid sequence, 86 residues long: Bradykinin-potentiating peptide 25.12 (86 aa).

The N-terminal stretch at 1–22 is a signal peptide; that stretch reads MNKRVLLVIFFVTLLIADEVNS. The interval 67–86 is disordered; it reads APAAAAAPEEPPVEQRRRRR.

Belongs to the non-disulfide-bridged peptide (NDBP) superfamily. Long chain multifunctional peptide (group 2) family. As to expression, expressed by the venom gland.

The protein localises to the secreted. Its function is as follows. Inhibits angiotensin-converting enzyme (ACE), but does not serve as substrate for the enzyme. Potentiates bradykinin (BK) on the isolated guinea pig ileum as well as the isolated rat uterus for contraction. Also potentiates in vivo the depressor effect of BK on arterial blood pressure in the normotensive anesthetized rat. The chain is Bradykinin-potentiating peptide 25.12 from Lychas mucronatus (Chinese swimming scorpion).